The primary structure comprises 540 residues: Zinc finger CCCH domain-containing protein 46 (540 aa).

The C3H1-type zinc finger occupies glycine 148–glycine 175. The RRM domain maps to arginine 258–lysine 334. Basic and acidic residues-rich tracts occupy residues valine 337–leucine 351 and glutamate 436–glycine 450. Disordered stretches follow at residues valine 337–glycine 365, glutamate 436–serine 469, and serine 490–serine 514. Serine 451 is subject to Phosphoserine. Residues serine 490–serine 511 are compositionally biased toward low complexity.

Its function is as follows. Possesses RNA-binding and ribonuclease activities in vitro. The polypeptide is Zinc finger CCCH domain-containing protein 46 (Arabidopsis thaliana (Mouse-ear cress)).